Consider the following 105-residue polypeptide: Small ribosomal subunit protein uS10 (105 aa).

Belongs to the universal ribosomal protein uS10 family. As to quaternary structure, part of the 30S ribosomal subunit.

Functionally, involved in the binding of tRNA to the ribosomes. The polypeptide is Small ribosomal subunit protein uS10 (Desulfotalea psychrophila (strain LSv54 / DSM 12343)).